We begin with the raw amino-acid sequence, 105 residues long: MDEILIKLEQILEQRKSAKADKSYVSSLYNKGTDEILKKISEESAEVIMATKDGSNDKIIYEIADLWFHTLVLLRFKKIKVEQITNELSRRFGLSGLKEKANRNN.

This sequence belongs to the PRA-PH family.

It is found in the cytoplasm. It catalyses the reaction 1-(5-phospho-beta-D-ribosyl)-ATP + H2O = 1-(5-phospho-beta-D-ribosyl)-5'-AMP + diphosphate + H(+). It participates in amino-acid biosynthesis; L-histidine biosynthesis; L-histidine from 5-phospho-alpha-D-ribose 1-diphosphate: step 2/9. The chain is Phosphoribosyl-ATP pyrophosphatase from Vesicomyosocius okutanii subsp. Calyptogena okutanii (strain HA).